Consider the following 374-residue polypeptide: Alcohol dehydrogenase class-3 (374 aa).

A2 is modified (N-acetylalanine). Zn(2+) contacts are provided by C45, H67, C97, C100, C103, C111, and C174. Position 233 is an N6-succinyllysine (K233). Position 247 is a phosphoserine (S247). K315 bears the N6-succinyllysine mark. 2 positions are modified to phosphoserine: S324 and S351.

Belongs to the zinc-containing alcohol dehydrogenase family. Class-III subfamily. In terms of assembly, homodimer. It depends on Zn(2+) as a cofactor.

It localises to the cytoplasm. It catalyses the reaction a primary alcohol + NAD(+) = an aldehyde + NADH + H(+). The enzyme catalyses a secondary alcohol + NAD(+) = a ketone + NADH + H(+). It carries out the reaction S-(hydroxymethyl)glutathione + NADP(+) = S-formylglutathione + NADPH + H(+). The catalysed reaction is S-(hydroxymethyl)glutathione + NAD(+) = S-formylglutathione + NADH + H(+). It catalyses the reaction 20-oxo-(5Z,8Z,11Z,14Z)-eicosatetraenoate + NAD(+) + H2O = (5Z,8Z,11Z,14Z)-eicosatetraenedioate + NADH + 2 H(+). The enzyme catalyses 20-hydroxy-(5Z,8Z,11Z,14Z)-eicosatetraenoate + NAD(+) = 20-oxo-(5Z,8Z,11Z,14Z)-eicosatetraenoate + NADH + H(+). It carries out the reaction S-nitrosoglutathione + NADH + H(+) = S-(hydroxysulfenamide)glutathione + NAD(+). Its function is as follows. Catalyzes the oxidation of long-chain primary alcohols and the oxidation of S-(hydroxymethyl) glutathione. Also oxidizes long chain omega-hydroxy fatty acids, such as 20-HETE, producing both the intermediate aldehyde, 20-oxoarachidonate and the end product, a dicarboxylic acid, (5Z,8Z,11Z,14Z)-eicosatetraenedioate. Class-III ADH is remarkably ineffective in oxidizing ethanol. Required for clearance of cellular formaldehyde, a cytotoxic and carcinogenic metabolite that induces DNA damage. Also acts as a S-nitroso-glutathione reductase by catalyzing the NADH-dependent reduction of S-nitrosoglutathione, thereby regulating protein S-nitrosylation. The polypeptide is Alcohol dehydrogenase class-3 (Oryctolagus cuniculus (Rabbit)).